Here is a 113-residue protein sequence, read N- to C-terminus: Protein Wnt-10 (113 aa).

Residue Ser1 is the site of O-palmitoleoyl serine; by PORCN attachment. An intrachain disulfide couples Cys79 to Cys94.

This sequence belongs to the Wnt family. Post-translationally, palmitoleoylation is required for efficient binding to frizzled receptors. Depalmitoleoylation leads to Wnt signaling pathway inhibition.

The protein resides in the secreted. Its subcellular location is the extracellular space. It localises to the extracellular matrix. Ligand for members of the frizzled family of seven transmembrane receptors. Probable developmental protein. May be a signaling molecule which affects the development of discrete regions of tissues. Is likely to signal over only few cell diameters. The sequence is that of Protein Wnt-10 (WNT-10) from Eptatretus stoutii (Pacific hagfish).